The primary structure comprises 496 residues: Fizzy-related protein homolog (496 aa).

3 disordered regions span residues Arg28–Ser51, Ile64–Gly88, and Glu105–Lys166. Position 32 is a phosphothreonine (Thr32). Positions Thr32–Ser42 are enriched in polar residues. Ser36 is modified (phosphoserine). An involved in APC/FZR1 E3 ubiquitin-protein ligase complex activity region spans residues Arg47–Arg52. The residue at position 69 (Lys69) is an N6-acetyllysine. 2 stretches are compositionally biased toward basic and acidic residues: residues Lys76–Lys86 and Lys106–Gly126. Residues Ser133, Ser138, Ser146, and Ser151 each carry the phosphoserine modification. The segment covering Ser146–Leu160 has biased composition (polar residues). Position 159 is an N6-acetyllysine (Lys159). WD repeat units follow at residues Pro182 to Leu222, Val227 to Met266, Gly269 to Glu306, Gly311 to Gln350, Glu353 to Cys395, Asp397 to Lys438, and Gly441 to Lys480.

The protein belongs to the WD repeat CDC20/Fizzy family. The unphosphorylated form interacts with APC/C during mitosis. Interacts with NINL. Interacts (in complex with the anaphase promoting complex APC) with MAD2L2; inhibits FZR1-mediated APC/C activation. Interacts with SIRT2 and USP37. Interacts (via WD repeats) with MAK. Interacts with RBBP8/CtIP; this interaction leads to RBBP8 proteasomal degradation. Interacts with HECW2. Interacts with SASS6; the interaction is regulated by CENATAC and leads to SASS6 proteasomal degradation. Interacts (via N-terminus) with CCNF. Interacts with CDC6. Interacts with TK1 (via the KEN box). In terms of processing, acetylated. Deacetylated by SIRT2 at Lys-69 and Lys-159; deacetylation enhances the interaction of FZR1 with CDC27, leading to activation of anaphase promoting complex/cyclosome (APC/C). Following DNA damage, it is dephosphorylated by CDC14B in G2 phase, leading to its reassociation with the APC/C, and allowing an efficient G2 DNA damage checkpoint. Phosphorylated by MAK. Post-translationally, ubiquitinated by the SCF(CCNF) E3 ubiquitin-protein ligase complex; leading to its degradation by the proteasome. As to expression, isoform 2 is expressed at high levels in heart, liver, spleen and some cancer cell lines whereas isoform 3 is expressed only at low levels in these tissues.

The protein resides in the nucleus. It is found in the cytoplasm. It participates in protein modification; protein ubiquitination. Functionally, substrate-specific adapter for the anaphase promoting complex/cyclosome (APC/C) E3 ubiquitin-protein ligase complex. Associates with the APC/C in late mitosis, in replacement of CDC20, and activates the APC/C during anaphase and telophase. The APC/C remains active in degrading substrates to ensure that positive regulators of the cell cycle do not accumulate prematurely. At the G1/S transition FZR1 is phosphorylated, leading to its dissociation from the APC/C. Following DNA damage, it is required for the G2 DNA damage checkpoint: its dephosphorylation and reassociation with the APC/C leads to the ubiquitination of PLK1, preventing entry into mitosis. Acts as an adapter for APC/C to target the DNA-end resection factor RBBP8/CtIP for ubiquitination and subsequent proteasomal degradation. Through the regulation of RBBP8/CtIP protein turnover, may play a role in DNA damage response, favoring DNA double-strand repair through error-prone non-homologous end joining (NHEJ) over error-free, RBBP8-mediated homologous recombination (HR). In Homo sapiens (Human), this protein is Fizzy-related protein homolog.